Reading from the N-terminus, the 827-residue chain is Beta-galactosidase 1 (827 aa).

Residues 1–25 (MMGRRGSSWCRWWVALLVLAVAADA) form the signal peptide. E187 serves as the catalytic Proton donor. N198 and N249 each carry an N-linked (GlcNAc...) asparagine glycan. Residue E259 is the Nucleophile of the active site. N260, N366, N392, N502, N520, N578, N586, and N615 each carry an N-linked (GlcNAc...) asparagine glycan. An SUEL-type lectin domain is found at 746-827 (GEAGDAVTLS…SGVLTVQATC (82 aa)).

Belongs to the glycosyl hydrolase 35 family.

It is found in the secreted. It localises to the extracellular space. The protein resides in the apoplast. The catalysed reaction is Hydrolysis of terminal non-reducing beta-D-galactose residues in beta-D-galactosides.. This chain is Beta-galactosidase 1, found in Oryza sativa subsp. japonica (Rice).